A 973-amino-acid polypeptide reads, in one-letter code: Serine/threonine-protein kinase atg1 (973 aa).

The Protein kinase domain occupies 23-328 (YTRLDEIGRG…FPDFFQNGVI (306 aa)). ATP contacts are provided by residues 29 to 37 (IGRGSFATV) and K52. Residue D166 is the Proton acceptor of the active site. Disordered regions lie at residues 338–446 (DDLP…PGRQ), 460–482 (RQKG…DKLR), 523–587 (GNIS…QSPT), and 949–973 (PTPS…TPPK). The span at 387–407 (GLTQRPPSQNQRFGTPQTTTP) shows a compositional bias: polar residues. Positions 523-537 (GNISRGAQTGALSRR) are enriched in polar residues. Over residues 566–582 (SRADSMHNRQGSYERRY) the composition is skewed to basic and acidic residues. Residues 951 to 965 (PSANVPSKMASSNPV) are compositionally biased toward polar residues.

It belongs to the protein kinase superfamily. Ser/Thr protein kinase family. APG1/unc-51/ULK1 subfamily. In terms of assembly, homodimer. Forms a ternary complex with ATG13 and ATG17.

It is found in the cytoplasm. Its subcellular location is the preautophagosomal structure membrane. The catalysed reaction is L-seryl-[protein] + ATP = O-phospho-L-seryl-[protein] + ADP + H(+). The enzyme catalyses L-threonyl-[protein] + ATP = O-phospho-L-threonyl-[protein] + ADP + H(+). Its function is as follows. Serine/threonine protein kinase involved in the cytoplasm to vacuole transport (Cvt) and found to be essential in autophagy, where it is required for the formation of autophagosomes. Involved in the clearance of protein aggregates which cannot be efficiently cleared by the proteasome. Required for selective autophagic degradation of the nucleus (nucleophagy) as well as for mitophagy which contributes to regulate mitochondrial quantity and quality by eliminating the mitochondria to a basal level to fulfill cellular energy requirements and preventing excess ROS production. Also involved in endoplasmic reticulum-specific autophagic process, in selective removal of ER-associated degradation (ERAD) substrates. Plays a key role in ATG9 and ATG23 cycling through the pre-autophagosomal structure and is necessary to promote ATG18 binding to ATG9 through phosphorylation of ATG9. Catalyzes phosphorylation of ATG4, decreasing the interaction between ATG4 and ATG8 and impairing deconjugation of PE-conjugated forms of ATG8. This is Serine/threonine-protein kinase atg1 from Aspergillus fumigatus (strain ATCC MYA-4609 / CBS 101355 / FGSC A1100 / Af293) (Neosartorya fumigata).